A 144-amino-acid chain; its full sequence is Eukaryotic translation initiation factor 1A, Y-chromosomal (144 aa).

Positions M1 to G15 are enriched in basic residues. The interval M1 to L26 is disordered. Positions K16–L26 are enriched in basic and acidic residues. Residues E22–N96 form the S1-like domain. K88 is covalently cross-linked (Glycyl lysine isopeptide (Lys-Gly) (interchain with G-Cter in ubiquitin)). The interval K114 to I144 is disordered. A compositionally biased stretch (acidic residues) spans G124–I144.

Belongs to the eIF-1A family. Component of the 43S pre-initiation complex (43S PIC), which is composed of the 40S ribosomal subunit, EIF1, eIF1A (EIF1AX), eIF3 complex, EIF5 and eIF2-GTP-initiator tRNA complex (eIF2 ternary complex). Interacts with EIF5; this interaction contributes to the maintenance of EIF1 within the open 43S PIC. Interacts through its C-terminal domain (CTD) with the CTD of EIF5B; from the location of the start codon by the 43S complex until the formation of the 80S complex. In terms of tissue distribution, ubiquitous.

Its subcellular location is the cytoplasm. In terms of biological role, component of the 43S pre-initiation complex (43S PIC), which binds to the mRNA cap-proximal region, scans mRNA 5'-untranslated region, and locates the initiation codon. This protein enhances formation of the cap-proximal complex. Together with EIF1, facilitates scanning, start codon recognition, promotion of the assembly of 48S complex at the initiation codon (43S PIC becomes 48S PIC after the start codon is reached), and dissociation of aberrant complexes. After start codon location, together with EIF5B orients the initiator methionine-tRNA in a conformation that allows 60S ribosomal subunit joining to form the 80S initiation complex. Is released after 80S initiation complex formation, just after GTP hydrolysis by EIF5B, and before release of EIF5B. Its globular part is located in the A site of the 40S ribosomal subunit. Its interaction with EIF5 during scanning contribute to the maintenance of EIF1 within the open 43S PIC. In contrast to yeast orthologs, does not bind EIF1. The protein is Eukaryotic translation initiation factor 1A, Y-chromosomal (EIF1AY) of Homo sapiens (Human).